Here is a 234-residue protein sequence, read N- to C-terminus: Thiamine-phosphate synthase (234 aa).

4-amino-2-methyl-5-(diphosphooxymethyl)pyrimidine-binding positions include 65–69 (QYRNK) and N97. 2 residues coordinate Mg(2+): D98 and D117. 4-amino-2-methyl-5-(diphosphooxymethyl)pyrimidine is bound at residue S136. 163 to 165 (SHT) contacts 2-[(2R,5Z)-2-carboxy-4-methylthiazol-5(2H)-ylidene]ethyl phosphate. K166 is a binding site for 4-amino-2-methyl-5-(diphosphooxymethyl)pyrimidine. 2-[(2R,5Z)-2-carboxy-4-methylthiazol-5(2H)-ylidene]ethyl phosphate contacts are provided by residues G192 and 212–213 (IS).

The protein belongs to the thiamine-phosphate synthase family. Requires Mg(2+) as cofactor.

It catalyses the reaction 2-[(2R,5Z)-2-carboxy-4-methylthiazol-5(2H)-ylidene]ethyl phosphate + 4-amino-2-methyl-5-(diphosphooxymethyl)pyrimidine + 2 H(+) = thiamine phosphate + CO2 + diphosphate. The catalysed reaction is 2-(2-carboxy-4-methylthiazol-5-yl)ethyl phosphate + 4-amino-2-methyl-5-(diphosphooxymethyl)pyrimidine + 2 H(+) = thiamine phosphate + CO2 + diphosphate. It carries out the reaction 4-methyl-5-(2-phosphooxyethyl)-thiazole + 4-amino-2-methyl-5-(diphosphooxymethyl)pyrimidine + H(+) = thiamine phosphate + diphosphate. Its pathway is cofactor biosynthesis; thiamine diphosphate biosynthesis; thiamine phosphate from 4-amino-2-methyl-5-diphosphomethylpyrimidine and 4-methyl-5-(2-phosphoethyl)-thiazole: step 1/1. Its function is as follows. Condenses 4-methyl-5-(beta-hydroxyethyl)thiazole monophosphate (THZ-P) and 2-methyl-4-amino-5-hydroxymethyl pyrimidine pyrophosphate (HMP-PP) to form thiamine monophosphate (TMP). This is Thiamine-phosphate synthase from Xylella fastidiosa (strain 9a5c).